A 262-amino-acid chain; its full sequence is MQQPIVGVGHSMGGCQIATLSVTSRRIFSTMILLDPAIGPPEMGLATLGLGQLTLRRRTQWLTREDAEKALRTSFSTWDPQVLDLLIKHSIHSDKQSVEMEDGPVSLVTGRYQELVNYIKPSFIRSGKVVGQELVHQTGPVDMYHMLGLVTCSTLYLCGGESTLSTPRARELWLSRTAELSYSKDPGEMRKVDERIVPDTGHFLPMEEPKECADIIADWIDKDECMIWNCHIGKQGNIWRDLSNTNRKMNAEVWIEYLQSKL.

Residues 260 to 262 carry the Peroxisomal targeting signal type 1 motif; that stretch reads SKL.

It belongs to the AB hydrolase superfamily. AKT2 hydrolase family.

The protein resides in the peroxisome. It functions in the pathway mycotoxin biosynthesis. Its function is as follows. Abhydrolase domain-containing protein; part of the gene clusters that mediate the biosynthesis of the host-selective toxins (HSTs) ACT-toxins responsible for brown spot of tangerine disease by the tangerine pathotype which affects tangerines and mandarins. ACT-toxins consist of three moieties, 9,10-epoxy-8-hydroxy-9-methyl-decatrienoic acid (EDA), valine and a polyketide. ACT-toxin I is toxic to both citrus and pear; toxin II the 5''-deoxy derivative of ACT-toxin I, is highly toxic to pear and slightly toxic to citrus. On cellular level, ACT-toxins affect plasma membrane of susceptible cells and cause a sudden increase in loss of K(+) after a few minutes of toxin treatment. The acyl-CoA ligase ACTT1, the hydrolase ACTT2, the enoyl-CoA hydratases ACTT3 and ACTT6, and the acyl-CoA synthetase ACTT5 are all involved in the biosynthesis of the AK-, AF- and ACT-toxin common 9,10-epoxy-8-hydroxy-9-methyl-decatrienoic acid (EDA) structural moiety. The exact role of each enzyme, and of additional enzymes identified within the AF-toxin clusters have still to be determined. On the other hand, ACTTS1 to ACTTS4 are specific to the tangerine pathotype. The function of ACTTS3 is to elongate the polyketide chain portion of ACT-toxin that is unique to this toxin. The enoyl-reductase ACTTS2 might complement the missing enoyl-reductase (ER) domain in ACTTS3 in the synthesis of the polyketide portion of ACT-toxin. The roles of the nonribosomal peptide synthetases-related proteins ACTTS1 and ACTTS4 have also still not been elucidated. This Alternaria alternata (Alternaria rot fungus) protein is Abhydrolase domain-containing protein ACTT2-1.